We begin with the raw amino-acid sequence, 424 residues long: Probable ribonuclease FAU-1 (424 aa).

Belongs to the FAU-1 family.

Its function is as follows. Probable RNase involved in rRNA stability through maturation and/or degradation of precursor rRNAs. Binds to RNA in loop regions with AU-rich sequences. The polypeptide is Probable ribonuclease FAU-1 (Saccharolobus islandicus (strain L.S.2.15 / Lassen #1) (Sulfolobus islandicus)).